The sequence spans 802 residues: E3 ubiquitin-protein ligase RNF10 (802 aa).

3 stretches are compositionally biased toward low complexity: residues 1–31, 78–90, and 104–113; these read MPQS…SGSS, SNQS…QKSK, and SKPFSSSSNG. Positions 1–134 are disordered; that stretch reads MPQSSPSTAA…AEFSPAQFSG (134 aa). Residue Ser-5 is modified to Phosphoserine. Residue Ser-110 is modified to Phosphoserine. The segment covering 114–124 has biased composition (basic and acidic residues); it reads GRRDEVAEAQR. At Ser-128 the chain carries Phosphoserine. The RING-type zinc finger occupies 225–267; that stretch reads CPICLYPPTAAKITRCGHIFCWACILHYLSLSERTWSKCPICY. The span at 645-654 shows a compositional bias: polar residues; that stretch reads DSALGPTSTE. 3 disordered regions span residues 645–664, 716–753, and 767–802; these read DSAL…LSPL, DGWP…VPSF, and KLDT…VHTK. Residues 716–728 are compositionally biased toward basic and acidic residues; that stretch reads DGWPKAAPKKDDN. Residues 793 to 802 show a composition bias toward polar residues; sequence LFSTSVVHTK.

This sequence belongs to the RNF10 family. In terms of assembly, interacts with MEOX2.

It localises to the cytoplasm. Its subcellular location is the nucleus. The enzyme catalyses S-ubiquitinyl-[E2 ubiquitin-conjugating enzyme]-L-cysteine + [acceptor protein]-L-lysine = [E2 ubiquitin-conjugating enzyme]-L-cysteine + N(6)-ubiquitinyl-[acceptor protein]-L-lysine.. It functions in the pathway protein modification; protein ubiquitination. E3 ubiquitin-protein ligase that catalyzes monoubiquitination of 40S ribosomal proteins RPS2/us5 and RPS3/us3 in response to ribosome stalling. Part of a ribosome quality control that takes place when ribosomes have stalled during translation initiation (iRQC): RNF10 acts by mediating monoubiquitination of RPS2/us5 and RPS3/us3, promoting their degradation by the proteasome. Also promotes ubiquitination of 40S ribosomal proteins in response to ribosome stalling during translation elongation. The action of RNF10 in iRQC is counteracted by USP10. May also act as a transcriptional factor involved in the regulation of MAG (Myelin-associated glycoprotein) expression. Acts as a regulator of Schwann cell differentiation and myelination. This chain is E3 ubiquitin-protein ligase RNF10, found in Rattus norvegicus (Rat).